The chain runs to 393 residues: Xylose transport system permease protein XylH (393 aa).

Topologically, residues 1-24 (MSKSNPSEVKLAVPTSGGFSGLKS) are periplasmic. A helical membrane pass occupies residues 25 to 45 (LNLQVFVMIAAIIAIMLFFTW). Over 46–64 (TTDGAYLSARNVSNLLRQT) the chain is Cytoplasmic. Residues 65–85 (AITGILAVGMVFVIISAEIDL) form a helical membrane-spanning segment. Residues 86–102 (SVGSMMGLLGGVAAICD) are Periplasmic-facing. Residues 103-123 (VWLGWPLPLTIIVTLVLGLLL) form a helical membrane-spanning segment. Residues 124-135 (GAWNGWWVAYRK) lie on the Cytoplasmic side of the membrane. Residues 136–156 (VPSFIVTLAGMLAFRGILIGI) form a helical membrane-spanning segment. The Periplasmic segment spans residues 157–175 (TNGTTVSPTSAAMSQIGQS). Residues 176–196 (YLPASTGFIIGALGLMAFVGW) form a helical membrane-spanning segment. The Cytoplasmic segment spans residues 197-214 (QWRGRMRRQALGLQSPAS). The helical transmembrane segment at 215–235 (TAVVGRQALTAIIVLGAIWLL) threads the bilayer. The Periplasmic portion of the chain corresponds to 236-239 (NDYR). A helical transmembrane segment spans residues 240–260 (GVPTPVLLLTLLLLGGMFMAT). Over 261 to 287 (RTAFGRRIYAIGGNLEAARLSGINVER) the chain is Cytoplasmic. A helical membrane pass occupies residues 288–308 (TKLAVFAINGLMVAIAGLILS). Topologically, residues 309–312 (SRLG) are periplasmic. Residues 313-333 (AGSPSAGNIAELDAIAACVIG) form a helical membrane-spanning segment. Over 334-336 (GTS) the chain is Cytoplasmic. Residues 337–357 (LAGGVGSVAGAVMGAFIMASL) traverse the membrane as a helical segment. Over 358–365 (DNGMSMMD) the chain is Periplasmic. A helical transmembrane segment spans residues 366-386 (VPTFWQYIVKGAILLLAVWMD). Residues 387–393 (SATKRRS) are Cytoplasmic-facing.

The protein belongs to the binding-protein-dependent transport system permease family. AraH/RbsC subfamily.

It is found in the cell inner membrane. Part of the binding-protein-dependent transport system for D-xylose. Probably responsible for the translocation of the substrate across the membrane. The sequence is that of Xylose transport system permease protein XylH (xylH) from Escherichia coli O6:H1 (strain CFT073 / ATCC 700928 / UPEC).